The following is a 412-amino-acid chain: Palmitoyltransferase ZDHHC6 (412 aa).

Residues 1-24 (MNILSAIIVFENLHEVKRLFHWGP) are Cytoplasmic-facing. The chain crosses the membrane as a helical span at residues 25–45 (IIALTVIGVCSSMAILDSIIW). The Lumenal segment spans residues 46-57 (YWPLDTTGGSIN). A helical transmembrane segment spans residues 58–78 (FIMLINWTVLILYNYFNAMFV). Topologically, residues 79-143 (GPGYIPLEWK…NCCGHLNHAY (65 aa)) are cytoplasmic. In terms of domain architecture, DHHC spans 99-149 (QFCRLCQGYKAPRSHHCRKCNRCVMKMDHHCPWINNCCGHLNHAYFTSFLL). Residue C129 is the S-palmitoyl cysteine intermediate of the active site. A helical transmembrane segment spans residues 144–164 (FTSFLLLAPLGCIHAALIFIM). Over 165-205 (TMYTQLYDRISFGWSSVKIDMSAARHIHHPIMPFSIAAFAA) the chain is Lumenal. Residues 206–226 (TLFALGLALGTTIAVGMLFFI) form a helical membrane-spanning segment. Topologically, residues 227 to 412 (QMKVILRNRT…NSTSEEKKEQ (186 aa)) are cytoplasmic. The region spanning 313–398 (QRSVEYRVVE…PRRCVEKCLY (86 aa)) is the SH3 domain. Residues C328, C329, and C343 are each lipidated (S-palmitoyl cysteine). A Di-lysine motif motif is present at residues 409–412 (KKEQ).

Belongs to the DHHC palmitoyltransferase family.

It localises to the endoplasmic reticulum membrane. The catalysed reaction is L-cysteinyl-[protein] + hexadecanoyl-CoA = S-hexadecanoyl-L-cysteinyl-[protein] + CoA. It carries out the reaction L-cysteinyl-[protein] + octadecanoyl-CoA = S-octadecanoyl-L-cysteinyl-[protein] + CoA. Functionally, endoplasmic reticulum palmitoyl acyltransferase that probably catalyzes the addition of palmitate onto various protein substrates and is involved in a variety of cellular processes. Could also function as a stearoyltransferase. This Danio rerio (Zebrafish) protein is Palmitoyltransferase ZDHHC6.